The sequence spans 133 residues: Nickel-responsive regulator (133 aa).

Histidine 76, histidine 87, histidine 89, and cysteine 95 together coordinate Ni(2+).

The protein belongs to the transcriptional regulatory CopG/NikR family. As to quaternary structure, homotetramer. The cofactor is Ni(2+).

Its function is as follows. Transcriptional repressor of the nikABCDE operon. Is active in the presence of excessive concentrations of intracellular nickel. The polypeptide is Nickel-responsive regulator (Escherichia fergusonii (strain ATCC 35469 / DSM 13698 / CCUG 18766 / IAM 14443 / JCM 21226 / LMG 7866 / NBRC 102419 / NCTC 12128 / CDC 0568-73)).